We begin with the raw amino-acid sequence, 550 residues long: Mitochondrial distribution and morphology protein 34 (550 aa).

The region spanning 1-208 is the SMP-LTD domain; it reads MAFNFNWSPL…CPEQMSKEDH (208 aa). Disordered regions lie at residues 294–313, 358–505, and 519–550; these read VDKPEASSTTPLTTPSLVKS, RNAK…ILEQ, and VYDEKQRNPSFWDEREDSPPPAYEAQPTTAAS. Over residues 300–310 the composition is skewed to low complexity; that stretch reads SSTTPLTTPSL. Positions 364-376 are enriched in basic residues; the sequence is ANRKKKTRVVNLR. Composition is skewed to polar residues over residues 391 to 407 and 458 to 467; these read MSDSASVQASESITMSD and AEISQPQVAR. Residues 481–495 show a composition bias toward basic and acidic residues; that stretch reads SENDKRSDSKRRGPR.

This sequence belongs to the MDM34 family. As to quaternary structure, component of the ER-mitochondria encounter structure (ERMES) or MDM complex, composed of MMM1, MDM10, MDM12 and MDM34.

The protein localises to the mitochondrion outer membrane. In terms of biological role, component of the ERMES/MDM complex, which serves as a molecular tether to connect the endoplasmic reticulum (ER) and mitochondria. Components of this complex are involved in the control of mitochondrial shape and protein biogenesis, and function in nonvesicular lipid trafficking between the ER and mitochondria. MDM34 is required for the interaction of the ER-resident membrane protein MMM1 and the outer mitochondrial membrane-resident beta-barrel protein MDM10. The polypeptide is Mitochondrial distribution and morphology protein 34 (Pyricularia oryzae (strain 70-15 / ATCC MYA-4617 / FGSC 8958) (Rice blast fungus)).